A 357-amino-acid polypeptide reads, in one-letter code: Uroporphyrinogen decarboxylase (357 aa).

Substrate-binding positions include 34–38 (RQAGR), D83, Y158, S213, and H336.

Belongs to the uroporphyrinogen decarboxylase family. Homodimer.

It is found in the cytoplasm. The enzyme catalyses uroporphyrinogen III + 4 H(+) = coproporphyrinogen III + 4 CO2. The protein operates within porphyrin-containing compound metabolism; protoporphyrin-IX biosynthesis; coproporphyrinogen-III from 5-aminolevulinate: step 4/4. Its function is as follows. Catalyzes the decarboxylation of four acetate groups of uroporphyrinogen-III to yield coproporphyrinogen-III. This is Uroporphyrinogen decarboxylase from Mycolicibacterium paratuberculosis (strain ATCC BAA-968 / K-10) (Mycobacterium paratuberculosis).